The following is a 720-amino-acid chain: Polyribonucleotide nucleotidyltransferase (720 aa).

Residues Asp-487 and Asp-493 each contribute to the Mg(2+) site. Residues 554–613 form the KH domain; sequence PRIETFKIPTDKIREVIGTGGKVIREIVEKTGAKINIEDDGTVKVASNDGEAMKAAIKWI. In terms of domain architecture, S1 motif spans 623 to 691; sequence GQIYEGTVVK…DRGKTRLSMK (69 aa). Positions 691 to 720 are disordered; the sequence is KAVDQQTGEDLEAAGHKAEKADAPREAAGE. Residues 703-720 are compositionally biased toward basic and acidic residues; that stretch reads AAGHKAEKADAPREAAGE.

It belongs to the polyribonucleotide nucleotidyltransferase family. Requires Mg(2+) as cofactor.

It is found in the cytoplasm. The enzyme catalyses RNA(n+1) + phosphate = RNA(n) + a ribonucleoside 5'-diphosphate. Its function is as follows. Involved in mRNA degradation. Catalyzes the phosphorolysis of single-stranded polyribonucleotides processively in the 3'- to 5'-direction. The sequence is that of Polyribonucleotide nucleotidyltransferase from Nitrobacter hamburgensis (strain DSM 10229 / NCIMB 13809 / X14).